Here is a 201-residue protein sequence, read N- to C-terminus: MRLNIVVVGVGGQGALTTSGIIARAAMRAGLNVVTAETHGMAQRGGSVEVHVRIGDVRAPLIPEGGADVMIALEPAEALRYAKFLNKNTLVILNTRKIIPPSVTAGTAKYPELDEIIGELRKVTPRVIPVNASEIAEKAGSVLATNVVVVGMLFGYYSMPFGIEHVEEAIRETMKSKIVDLNLKALKMGYNQAISGRPSAV.

Heterodimer of the IorA and IorB subunits.

The enzyme catalyses indole-3-pyruvate + 2 oxidized [2Fe-2S]-[ferredoxin] + CoA = (indol-3-yl)acetyl-CoA + 2 reduced [2Fe-2S]-[ferredoxin] + CO2 + H(+). Its function is as follows. Catalyzes the ferredoxin-dependent oxidative decarboxylation of arylpyruvates. The chain is Indolepyruvate oxidoreductase subunit IorB (iorB) from Archaeoglobus fulgidus (strain ATCC 49558 / DSM 4304 / JCM 9628 / NBRC 100126 / VC-16).